The primary structure comprises 61 residues: Large ribosomal subunit protein uL29 (61 aa).

It belongs to the universal ribosomal protein uL29 family.

The chain is Large ribosomal subunit protein uL29 from Xanthomonas euvesicatoria pv. vesicatoria (strain 85-10) (Xanthomonas campestris pv. vesicatoria).